A 228-amino-acid chain; its full sequence is Phosphoribosylformylglycinamidine synthase subunit PurQ (228 aa).

The Glutamine amidotransferase type-1 domain occupies 2-225 (KAAVISFPGS…INQTEGADVR (224 aa)). The Nucleophile role is filled by Cys86. Catalysis depends on residues His194 and Glu196.

In terms of assembly, part of the FGAM synthase complex composed of 1 PurL, 1 PurQ and 2 PurS subunits.

The protein resides in the cytoplasm. It carries out the reaction N(2)-formyl-N(1)-(5-phospho-beta-D-ribosyl)glycinamide + L-glutamine + ATP + H2O = 2-formamido-N(1)-(5-O-phospho-beta-D-ribosyl)acetamidine + L-glutamate + ADP + phosphate + H(+). The catalysed reaction is L-glutamine + H2O = L-glutamate + NH4(+). The protein operates within purine metabolism; IMP biosynthesis via de novo pathway; 5-amino-1-(5-phospho-D-ribosyl)imidazole from N(2)-formyl-N(1)-(5-phospho-D-ribosyl)glycinamide: step 1/2. In terms of biological role, part of the phosphoribosylformylglycinamidine synthase complex involved in the purines biosynthetic pathway. Catalyzes the ATP-dependent conversion of formylglycinamide ribonucleotide (FGAR) and glutamine to yield formylglycinamidine ribonucleotide (FGAM) and glutamate. The FGAM synthase complex is composed of three subunits. PurQ produces an ammonia molecule by converting glutamine to glutamate. PurL transfers the ammonia molecule to FGAR to form FGAM in an ATP-dependent manner. PurS interacts with PurQ and PurL and is thought to assist in the transfer of the ammonia molecule from PurQ to PurL. This chain is Phosphoribosylformylglycinamidine synthase subunit PurQ, found in Lacticaseibacillus paracasei (strain ATCC 334 / BCRC 17002 / CCUG 31169 / CIP 107868 / KCTC 3260 / NRRL B-441) (Lactobacillus paracasei).